We begin with the raw amino-acid sequence, 223 residues long: Cytolethal distending toxin subunit A (223 aa).

An N-terminal signal peptide occupies residues 1-15 (MKKFLPSLLLMGSVA). Residue Cys-16 is the site of N-palmitoyl cysteine attachment. Cys-16 carries S-diacylglycerol cysteine lipidation. Residues 20–48 (QRMNDYSQPESQSDLAPKSSTIQPQPQPL) are disordered. The interval 91–102 (WALAKRNWLWAY) is mediates binding to target cells. Residues 123-212 (HREYFRFVNQ…EPSRDQTWYL (90 aa)) form the Ricin B-type lectin domain.

As to quaternary structure, heterotrimer of 3 subunits, CdtA, CdtB and CdtC.

The protein resides in the cell outer membrane. In terms of biological role, CDTs are cytotoxins which induce host cell distension, growth arrest in G2/M phase, nucleus swelling, and chromatin fragmentation in HeLa cells. CdtA, along with CdtC, probably forms a heterodimeric subunit required for the delivery of CdtB. This is Cytolethal distending toxin subunit A (cdtA) from Haemophilus ducreyi (strain 35000HP / ATCC 700724).